Consider the following 347-residue polypeptide: NADH-ubiquinone oxidoreductase chain 2 (347 aa).

The next 10 membrane-spanning stretches (helical) occupy residues 3–23 (PLIFIIIMFTLILGTVITMIS), 26–46 (WLLIWMGLEMNMFSMIPIIMM), 67–87 (SMLLMMGVIINLYYSGQWTIM), 96–116 (YMMTIALAMKLGLAPFHFWVP), 149–169 (LNLNLMLTLAILSILIGGWGG), 178–198 (IMAYSSIAHMGWMTAIIMYNT), 200–220 (LMMLNLVIYLMMTITMFALFI), 239–259 (ILTTMLLTTLLSLGGLPPLSG), 274–294 (NMLLLPTTMAIMALLNLYFYM), and 325–345 (LSPTLITLSTMLIPLTPMMLI).

Belongs to the complex I subunit 2 family. Core subunit of respiratory chain NADH dehydrogenase (Complex I) which is composed of 45 different subunits. Interacts with TMEM242.

Its subcellular location is the mitochondrion inner membrane. It catalyses the reaction a ubiquinone + NADH + 5 H(+)(in) = a ubiquinol + NAD(+) + 4 H(+)(out). Its function is as follows. Core subunit of the mitochondrial membrane respiratory chain NADH dehydrogenase (Complex I) which catalyzes electron transfer from NADH through the respiratory chain, using ubiquinone as an electron acceptor. Essential for the catalytic activity and assembly of complex I. In Dasypus novemcinctus (Nine-banded armadillo), this protein is NADH-ubiquinone oxidoreductase chain 2.